Here is a 324-residue protein sequence, read N- to C-terminus: MGVHILSTGSSVPNFSVENQQFEDMIETSDHWISTRTGIKKRHLAPSSTSLTKLAAEAANKALYAANLKPTEISLIILATSTPDDLFGSASQLQAEIGATTPVAFDITAACSGFIVALVTAAQFIQLVYDNILVVGADTCLDGLIGQIELPVFYLVMVLEQLVLGQSLKNSILGFKLCTDGQLNSHLQLMNKPVNNQKFGGTEIPHGNYNSITMNGKEVYKFAVFQVPTVIRQCLNNLNISIDEVDWFILHQANTRIIEAIASRLSVPFSKMITNLEHYGNTSAASIPLALDEAIQSNKIQPGQIIVLSGFGAGLTWGAIVLKW.

Catalysis depends on residues C111 and H251. The ACP-binding stretch occupies residues 252 to 256 (QANTR). Residue N281 is part of the active site.

Belongs to the thiolase-like superfamily. FabH family. In terms of assembly, homodimer.

The protein resides in the plastid. The protein localises to the chloroplast. The catalysed reaction is malonyl-[ACP] + acetyl-CoA + H(+) = 3-oxobutanoyl-[ACP] + CO2 + CoA. The protein operates within lipid metabolism; fatty acid biosynthesis. Catalyzes the condensation reaction of fatty acid synthesis by the addition to an acyl acceptor of two carbons from malonyl-ACP. Catalyzes the first condensation reaction which initiates fatty acid synthesis and may therefore play a role in governing the total rate of fatty acid production. Possesses both acetoacetyl-ACP synthase and acetyl transacylase activities. Its substrate specificity determines the biosynthesis of branched-chain and/or straight-chain of fatty acids. This Pyropia yezoensis (Susabi-nori) protein is Beta-ketoacyl-[acyl-carrier-protein] synthase III.